Reading from the N-terminus, the 447-residue chain is N-succinylarginine dihydrolase (447 aa).

Residues Ala-19–Ser-28, Asn-110, and His-137–Arg-138 each bind substrate. Residue Glu-174 is part of the active site. Substrate is bound at residue Arg-212. His-248 is an active-site residue. The substrate site is built by Asp-250 and Asn-359. Cys-365 acts as the Nucleophile in catalysis.

It belongs to the succinylarginine dihydrolase family. As to quaternary structure, homodimer.

The catalysed reaction is N(2)-succinyl-L-arginine + 2 H2O + 2 H(+) = N(2)-succinyl-L-ornithine + 2 NH4(+) + CO2. Its pathway is amino-acid degradation; L-arginine degradation via AST pathway; L-glutamate and succinate from L-arginine: step 2/5. In terms of biological role, catalyzes the hydrolysis of N(2)-succinylarginine into N(2)-succinylornithine, ammonia and CO(2). This chain is N-succinylarginine dihydrolase, found in Escherichia coli (strain SMS-3-5 / SECEC).